The sequence spans 360 residues: Pyrimidine monooxygenase RutA (360 aa).

FMN-binding positions include 49–50, Asn-115, Glu-124, 140–141, and Ser-190; these read IK and RY.

Belongs to the NtaA/SnaA/DszA monooxygenase family. RutA subfamily.

The catalysed reaction is uracil + FMNH2 + NADH + O2 = (Z)-3-ureidoacrylate + FMN + NAD(+) + H2O + H(+). It catalyses the reaction thymine + FMNH2 + NADH + O2 = (Z)-2-methylureidoacrylate + FMN + NAD(+) + H2O + H(+). In terms of biological role, catalyzes the pyrimidine ring opening between N-3 and C-4 by an unusual flavin hydroperoxide-catalyzed mechanism, adding oxygen atoms in the process to yield ureidoacrylate peracid, that immediately reacts with FMN forming ureidoacrylate and FMN-N(5)-oxide. The FMN-N(5)-oxide reacts spontaneously with NADH to produce FMN. Requires the flavin reductase RutF to regenerate FMN in vivo. This is Pyrimidine monooxygenase RutA from Bradyrhizobium sp. (strain BTAi1 / ATCC BAA-1182).